We begin with the raw amino-acid sequence, 172 residues long: Protein GrpE (172 aa).

The tract at residues 1-23 is disordered; the sequence is MNQDHPECDSEELTQNSPETDPL.

The protein belongs to the GrpE family. In terms of assembly, homodimer.

It localises to the cytoplasm. Its function is as follows. Participates actively in the response to hyperosmotic and heat shock by preventing the aggregation of stress-denatured proteins, in association with DnaK and GrpE. It is the nucleotide exchange factor for DnaK and may function as a thermosensor. Unfolded proteins bind initially to DnaJ; upon interaction with the DnaJ-bound protein, DnaK hydrolyzes its bound ATP, resulting in the formation of a stable complex. GrpE releases ADP from DnaK; ATP binding to DnaK triggers the release of the substrate protein, thus completing the reaction cycle. Several rounds of ATP-dependent interactions between DnaJ, DnaK and GrpE are required for fully efficient folding. The polypeptide is Protein GrpE (Xylella fastidiosa (strain M23)).